A 313-amino-acid chain; its full sequence is Lactamase-like protein ptaB (313 aa).

Zn(2+)-binding residues include His-104, His-106, Asp-108, and His-109. Asp-108 (proton donor/acceptor) is an active-site residue.

The protein belongs to the metallo-beta-lactamase superfamily. Zn(2+) serves as cofactor.

It catalyses the reaction atrochrysone carboxyl-[ACP] + H2O = atrochrysone carboxylate + holo-[ACP] + H(+). It functions in the pathway secondary metabolite biosynthesis. Lactamase-like protein; part of the gene cluster that mediates the biosynthesis of pestheic acid, a diphenyl ether which is a biosynthetic precursor of the unique chloropupukeananes. The biosynthesis initiates from condensation of acetate and malonate units catalyzed by the non-reducing PKS ptaA. As the ptaA protein is TE/CLC domain-deficient, hydrolysis and Claisen cyclization of the polyketide could be catalyzed by ptaB containing a beta-lactamase domain. The ptaB protein might hydrolyze the thioester bond between the ACP of ptaA and the intermediate to release atrochrysone carboxylic acid, which is spontaneously dehydrated to form endocrocin anthrone. Endocrocin anthrone is then converted to endocrocin, catalyzed by the anthrone oxygenase ptaC. Spontaneous decarboxylation of endocrocin occurs to generate emodin. An O-methyltransferase (ptaH or ptaI) could methylate emodin to form physcion. PtaJ could then catalyze the oxidative cleavage of physcion, and rotation of the intermediate could then afford desmethylisosulochrin. PtaF, a putative NADH-dependent oxidoreductase, might also participate in the oxidative cleavage step. Desmethylisosulochrin is then transformed by another O-methyltransferase (ptaH or ptaI) to form isosulochrin. Chlorination of isosulochrin by ptaM in the cyclohexadienone B ring then produces chloroisosulochrin. PtaE is responsible for the oxidative coupling reactions of both benzophenones isosulochrin and chloroisosulochrin to RES-1214-1 and pestheic acid respectively, regardless of chlorination. This is Lactamase-like protein ptaB from Pestalotiopsis fici (strain W106-1 / CGMCC3.15140).